The chain runs to 407 residues: 12S rRNA N(4)-cytidine methyltransferase METTL15 (407 aa).

S-adenosyl-L-methionine is bound by residues 100–102 (GGH), Asp119, Phe146, Asp169, and Gln176. Ser358 carries the post-translational modification Phosphoserine.

This sequence belongs to the methyltransferase superfamily. RsmH family.

Its subcellular location is the mitochondrion matrix. It catalyses the reaction cytidine(839) in 12S rRNA + S-adenosyl-L-methionine = N(4)-methylcytidine(839) in 12S rRNA + S-adenosyl-L-homocysteine + H(+). Its function is as follows. N4-methylcytidine (m4C) methyltransferase responsible for the methylation of position C839 in mitochondrial 12S rRNA. Involved in the stabilization of 12S rRNA folding, therefore facilitating the assembly of the mitochondrial small ribosomal subunits. The protein is 12S rRNA N(4)-cytidine methyltransferase METTL15 of Homo sapiens (Human).